The primary structure comprises 273 residues: Alcohol dehydrogenase-related 31 kDa protein (273 aa).

Tyr-11 to Leu-34 serves as a coordination point for NAD(+). Ser-139 lines the substrate pocket. Tyr-152 serves as the catalytic Proton acceptor.

This sequence belongs to the short-chain dehydrogenases/reductases (SDR) family.

The polypeptide is Alcohol dehydrogenase-related 31 kDa protein (Adhr) (Drosophila immigrans (Fruit fly)).